The sequence spans 100 residues: Urease subunit gamma (100 aa).

This sequence belongs to the urease gamma subunit family. As to quaternary structure, heterotrimer of UreA (gamma), UreB (beta) and UreC (alpha) subunits. Three heterotrimers associate to form the active enzyme.

It is found in the cytoplasm. The catalysed reaction is urea + 2 H2O + H(+) = hydrogencarbonate + 2 NH4(+). Its pathway is nitrogen metabolism; urea degradation; CO(2) and NH(3) from urea (urease route): step 1/1. The polypeptide is Urease subunit gamma (Rhodopseudomonas palustris (strain BisB18)).